The following is a 221-amino-acid chain: Large ribosomal subunit protein uL4 (221 aa).

Residues 46 to 74 form a disordered region; it reads AGTASTKTRSEVSGGGRKPWPQKHTGRAR.

Belongs to the universal ribosomal protein uL4 family. As to quaternary structure, part of the 50S ribosomal subunit.

Functionally, one of the primary rRNA binding proteins, this protein initially binds near the 5'-end of the 23S rRNA. It is important during the early stages of 50S assembly. It makes multiple contacts with different domains of the 23S rRNA in the assembled 50S subunit and ribosome. Forms part of the polypeptide exit tunnel. This is Large ribosomal subunit protein uL4 from Petrotoga mobilis (strain DSM 10674 / SJ95).